Reading from the N-terminus, the 221-residue chain is MATLSQEATLVHQALVARGLETPLRSPVREMDDDARKQLIAGHMTEIMQLLNLDLEDDSLAETPQRIAKMYVNEVFSGLDYANFPKITVIENKMKVDEMVTVRDITLTSTCEHHFVIIDGQATVAYIPKDKVIGLSKINRIVQFFSSRPQVQERLTQQILVALQTLLGTSNVAVSIDAVHYCVKARGIRDATSATTTTSLGGLFKSSQNTRQEFLRSVRHR.

Residues cysteine 111, histidine 114, and cysteine 182 each contribute to the Zn(2+) site.

The protein belongs to the GTP cyclohydrolase I family. Homomer.

It catalyses the reaction GTP + H2O = 7,8-dihydroneopterin 3'-triphosphate + formate + H(+). Its pathway is cofactor biosynthesis; 7,8-dihydroneopterin triphosphate biosynthesis; 7,8-dihydroneopterin triphosphate from GTP: step 1/1. The sequence is that of GTP cyclohydrolase 1 from Erwinia tasmaniensis (strain DSM 17950 / CFBP 7177 / CIP 109463 / NCPPB 4357 / Et1/99).